A 583-amino-acid chain; its full sequence is Moesin/ezrin/radixin homolog 1 (583 aa).

The FERM domain maps to 11 to 301 (MNVRVTTMDA…GNHELYMRRR (291 aa)). 2 disordered regions span residues 466-518 (TTTP…RTLA) and 539-558 (RDDT…VRQG). Over residues 476–485 (EEEEDNEEEL) the composition is skewed to acidic residues. A compositionally biased stretch (basic and acidic residues) spans 496–518 (DYSKDFDTDEHIKDPVEERRTLA). Threonine 564 bears the Phosphothreonine mark.

Interacts with cytoskeletal actin.

It localises to the cell junction. Its subcellular location is the adherens junction. The protein resides in the cell projection. It is found in the microvillus. The protein localises to the rhabdomere. It localises to the cell membrane. Its subcellular location is the cytoplasm. The protein resides in the cytoskeleton. Functionally, involved in connections of major cytoskeletal structures to the plasma membrane. The sequence is that of Moesin/ezrin/radixin homolog 1 from Aedes aegypti (Yellowfever mosquito).